The primary structure comprises 252 residues: Probable phosphatase Shewana3_2794 (252 aa).

Residues His8, His10, His16, His41, Glu74, His102, His132, Asp193, and His195 each coordinate Zn(2+).

It belongs to the PHP family. Zn(2+) is required as a cofactor.

The polypeptide is Probable phosphatase Shewana3_2794 (Shewanella sp. (strain ANA-3)).